The primary structure comprises 500 residues: Cysteine-rich secretory protein LCCL domain-containing 1 (500 aa).

Residues 1 to 23 (MMCKAQEWLRVTALLFVARAVPA) form the signal peptide. An SCP domain is found at 66-206 (LDLHNKLRSQ…PKAVYLVCNY (141 aa)). The interval 258-281 (EIERQQSQVHDTHVRTRSDDSDRN) is disordered. LCCL domains lie at 289–384 (MSQI…ANSF) and 390–492 (TVQA…TGGK). 4 disulfide bridges follow: cysteine 295-cysteine 313, cysteine 317-cysteine 337, cysteine 396-cysteine 418, and cysteine 422-cysteine 445.

The protein belongs to the CRISP family.

It is found in the secreted. The polypeptide is Cysteine-rich secretory protein LCCL domain-containing 1 (Crispld1) (Mus musculus (Mouse)).